The sequence spans 238 residues: Metal-independent phosphoserine phosphatase (238 aa).

Residue histidine 32 is the Tele-phosphohistidine intermediate of the active site. Glutamate 107 functions as the Proton donor/acceptor in the catalytic mechanism.

It belongs to the phosphoglycerate mutase family.

The enzyme catalyses O-phospho-L-serine + H2O = L-serine + phosphate. It carries out the reaction O-phospho-D-serine + H2O = D-serine + phosphate. Functionally, phosphoglycerate mutase-like protein lacking PGM activity, but having a low metal-independent phosphoserine phosphatase activity in vitro. May be involved in serine biosynthesis. This chain is Metal-independent phosphoserine phosphatase (IPSP), found in Arabidopsis thaliana (Mouse-ear cress).